The chain runs to 556 residues: Calcium-dependent protein kinase 5 (556 aa).

Residues 1 to 40 are disordered; that stretch reads MGNSCRGSFKDKLDEGDNNKPEDYSKTSTTNLSSNSDHSP. Residue Gly-2 is the site of N-myristoyl glycine attachment. The segment covering 8–25 has biased composition (basic and acidic residues); sequence SFKDKLDEGDNNKPEDYS. Residues 26 to 39 show a composition bias toward low complexity; it reads KTSTTNLSSNSDHS. The Protein kinase domain maps to 97 to 355; it reads YTLSRKLGQG…AHEVLRHPWI (259 aa). Residues 103 to 111 and Lys-126 each bind ATP; that span reads LGQGQFGTT. The active-site Proton acceptor is the Asp-221. Ser-261 is subject to Phosphoserine. The interval 361–391 is autoinhibitory domain; the sequence is APDRALDPAVLSRLKQFSAMNKLKKMALKVI. EF-hand domains follow at residues 398–433, 434–469, 470–505, and 509–539; these read EEIA…YGST, LKDT…LNKL, EREE…HGMA, and LEDI…GNAG. 18 residues coordinate Ca(2+): Asp-411, Asp-413, Ser-415, Glu-422, Asp-447, Asp-449, Ser-451, Thr-453, Glu-458, Asp-483, Asp-485, Ser-487, Glu-494, Asp-517, Asn-519, Asp-521, Lys-523, and Glu-528.

It belongs to the protein kinase superfamily. Ser/Thr protein kinase family. CDPK subfamily.

The protein localises to the membrane. It catalyses the reaction L-seryl-[protein] + ATP = O-phospho-L-seryl-[protein] + ADP + H(+). It carries out the reaction L-threonyl-[protein] + ATP = O-phospho-L-threonyl-[protein] + ADP + H(+). With respect to regulation, activated by calcium. Autophosphorylation may play an important role in the regulation of the kinase activity. Its function is as follows. May play a role in signal transduction pathways that involve calcium as a second messenger. The chain is Calcium-dependent protein kinase 5 (CPK5) from Arabidopsis thaliana (Mouse-ear cress).